The sequence spans 299 residues: Sodium/potassium-transporting ATPase subunit beta-2 (299 aa).

Residues 1–36 (MAALTQKKTCSQMMEEWKEFMWNPRTREFMGRTGSS) are Cytoplasmic-facing. The chain crosses the membrane as a helical; Signal-anchor for type II membrane protein span at residues 37–57 (WALILLFYVVFYAFLTAVFSL). Over 58–299 (SLWVMLQTID…VIFTMKIDRL (242 aa)) the chain is Extracellular. 2 N-linked (GlcNAc...) asparagine glycosylation sites follow: Asn101 and Asn119. Disulfide bonds link Cys130-Cys152 and Cys162-Cys178. N-linked (GlcNAc...) asparagine glycans are attached at residues Asn199, Asn226, Asn247, and Asn259. An intrachain disulfide couples Cys206 to Cys270.

The protein belongs to the X(+)/potassium ATPases subunit beta family. In terms of assembly, the sodium/potassium-transporting ATPase is composed of a catalytic alpha subunit, an auxiliary non-catalytic beta subunit and an additional regulatory subunit. In terms of tissue distribution, expressed at a high level in bladder epithelial cells and eye and at a trace level in kidney; it is not detectable in significant amounts in the stomach, colon and small intestine.

The protein localises to the cell membrane. Its function is as follows. This is the non-catalytic component of the active enzyme, which catalyzes the hydrolysis of ATP coupled with the exchange of Na(+) and K(+) ions across the plasma membrane. The exact function of this glycoprotein is not known. Some specific sequence of the beta subunit can modulate the activation of the Na,K-pump by extracellular potassium ions. The sequence is that of Sodium/potassium-transporting ATPase subunit beta-2 from Rhinella marina (Cane toad).